We begin with the raw amino-acid sequence, 499 residues long: MTDTQDKNYIIALDQGTTSSRAIIFDRDANVVGTSQREFAQHYPQAGWVEHDPMEIFATQSATMVEALAQAGISHAQVAALGITNQRETTVVWDKETGRPVYNAIVWQCRRSTEICAQLKRDGHEGYIRETTGLVTDPYFSGTKLKWILDNVDGARERAERGELLFGTIDTWLIWKFTGGKVHVTDYTNASRTLMFNIHSLQWDDKLLQILGIPRQMLPEVRPSSEVYGHTKSGIAIAGIAGDQQSALFGQMCVEPGQAKNTYGTGCFLLMNTGDQAVKSSHGLLTTIACGPRGEVAYALEGAVFNGGSTVQWLRDELKIVNDALDTEYFASKVKDSNGVYLVPAFTGLGAPYWDPYARGALFGLTRGVKVDHIIRAALESIAYQTRDVLDAMQQDCGQRLSELRVDGGAVANNFLMQFQADILGTCVERPQMRETTALGAAYLAGLACGFWSGLDELRDKAIIEREFSPQLDETQKEKLYAGWKKAVERTRDWEDHEA.

Thr-17 is a binding site for ADP. ATP-binding residues include Thr-17, Thr-18, and Ser-19. Thr-17 contributes to the sn-glycerol 3-phosphate binding site. An ADP-binding site is contributed by Arg-21. Sn-glycerol 3-phosphate is bound by residues Arg-87, Glu-88, Tyr-139, and Asp-243. Residues Arg-87, Glu-88, Tyr-139, Asp-243, and Gln-244 each coordinate glycerol. ADP contacts are provided by Thr-265 and Gly-308. Residues Thr-265, Gly-308, Gln-312, and Gly-409 each contribute to the ATP site. ADP contacts are provided by Gly-409 and Asn-413.

This sequence belongs to the FGGY kinase family.

It catalyses the reaction glycerol + ATP = sn-glycerol 3-phosphate + ADP + H(+). Its pathway is polyol metabolism; glycerol degradation via glycerol kinase pathway; sn-glycerol 3-phosphate from glycerol: step 1/1. Inhibited by fructose 1,6-bisphosphate (FBP). Its function is as follows. Key enzyme in the regulation of glycerol uptake and metabolism. Catalyzes the phosphorylation of glycerol to yield sn-glycerol 3-phosphate. This is Glycerol kinase from Pseudomonas putida (strain ATCC 700007 / DSM 6899 / JCM 31910 / BCRC 17059 / LMG 24140 / F1).